The following is a 503-amino-acid chain: Probable zinc metalloprotease UREG_01421 (503 aa).

Residues 1-24 (MHSLSSALAGSTFVLLFLCLLASA) form the signal peptide. The N-linked (GlcNAc...) asparagine glycan is linked to Asn105. 3 residues coordinate Zn(2+): His176, Asp196, and Glu232. The N-linked (GlcNAc...) asparagine glycan is linked to Asn247. Zn(2+) is bound at residue Asp259. The Fibronectin type-III domain maps to 416 to 503 (MPRNVRVSTR…RGVAVLPFPA (88 aa)). Asn429 carries N-linked (GlcNAc...) asparagine glycosylation.

This sequence belongs to the peptidase M28 family. M28B subfamily. The cofactor is Zn(2+).

The protein resides in the secreted. This Uncinocarpus reesii (strain UAMH 1704) protein is Probable zinc metalloprotease UREG_01421.